Consider the following 456-residue polypeptide: Phosphomethylpyrimidine synthase (456 aa).

Substrate-binding positions include asparagine 80, methionine 109, tyrosine 139, histidine 175, serine 195–glycine 197, aspartate 236–arginine 239, and glutamate 275. Residue histidine 279 participates in Zn(2+) binding. Tyrosine 302 serves as a coordination point for substrate. Zn(2+) is bound at residue histidine 343. [4Fe-4S] cluster contacts are provided by cysteine 423, cysteine 426, and cysteine 431.

This sequence belongs to the ThiC family. [4Fe-4S] cluster is required as a cofactor.

The enzyme catalyses 5-amino-1-(5-phospho-beta-D-ribosyl)imidazole + S-adenosyl-L-methionine = 4-amino-2-methyl-5-(phosphooxymethyl)pyrimidine + CO + 5'-deoxyadenosine + formate + L-methionine + 3 H(+). The protein operates within cofactor biosynthesis; thiamine diphosphate biosynthesis. Catalyzes the synthesis of the hydroxymethylpyrimidine phosphate (HMP-P) moiety of thiamine from aminoimidazole ribotide (AIR) in a radical S-adenosyl-L-methionine (SAM)-dependent reaction. The protein is Phosphomethylpyrimidine synthase of Synechococcus elongatus (strain ATCC 33912 / PCC 7942 / FACHB-805) (Anacystis nidulans R2).